Consider the following 301-residue polypeptide: Bifunctional dTDP-4-dehydrorhamnose 3,5-epimerase/dTDP-4-dehydrorhamnose reductase (301 aa).

NADPH is bound by residues 23-24 (WI), 69-71 (GVT), and tyrosine 111.

Belongs to the dTDP-4-dehydrorhamnose reductase family. Expressed in roots, leaves, stems and flowers.

The catalysed reaction is dTDP-4-dehydro-6-deoxy-alpha-D-glucose = dTDP-4-dehydro-beta-L-rhamnose. It catalyses the reaction dTDP-beta-L-rhamnose + NADP(+) = dTDP-4-dehydro-beta-L-rhamnose + NADPH + H(+). Its pathway is carbohydrate biosynthesis; dTDP-L-rhamnose biosynthesis. Functionally, bifunctional enzyme involved in dTDP-beta-L-rhamnose biosynthesis. Catalyzes the epimerization of the C3' and C5'positions of dTDP-6-deoxy-4-keto-alpha-D-glucose to form dTDP-4-keto-beta-L-rhamnose and its reduction to yield dTDP-beta-L-rhamnose. Can form UDP-beta-L-rhamnose from UDP-6-deoxy-4-keto-alpha-D-glucose, but cannot convert GDP-4-dehydro-6-deoxy-D-mannose to GDP-fucose. This chain is Bifunctional dTDP-4-dehydrorhamnose 3,5-epimerase/dTDP-4-dehydrorhamnose reductase, found in Arabidopsis thaliana (Mouse-ear cress).